The chain runs to 195 residues: Probable DNA-directed RNA polymerase subunit delta (195 aa).

The HTH HARE-type domain occupies 14-81 (FALVEIATAI…GNNEWALRAW (68 aa)). Acidic residues-rich tracts occupy residues 120–172 (DDDV…DESI) and 181–195 (GGDDLDDLSDGDQEK). Residues 120–195 (DDDVIDYNDD…DDLSDGDQEK (76 aa)) form a disordered region.

The protein belongs to the RpoE family. In terms of assembly, RNAP is composed of a core of 2 alpha, a beta and a beta' subunits. The core is associated with a delta subunit and one of several sigma factors.

Participates in both the initiation and recycling phases of transcription. In the presence of the delta subunit, RNAP displays an increased specificity of transcription, a decreased affinity for nucleic acids, and an increased efficiency of RNA synthesis because of enhanced recycling. The protein is Probable DNA-directed RNA polymerase subunit delta of Leuconostoc mesenteroides subsp. mesenteroides (strain ATCC 8293 / DSM 20343 / BCRC 11652 / CCM 1803 / JCM 6124 / NCDO 523 / NBRC 100496 / NCIMB 8023 / NCTC 12954 / NRRL B-1118 / 37Y).